A 163-amino-acid polypeptide reads, in one-letter code: Endoribonuclease YbeY (163 aa).

Residues H129, H133, and H139 each coordinate Zn(2+).

Belongs to the endoribonuclease YbeY family. Zn(2+) is required as a cofactor.

It is found in the cytoplasm. In terms of biological role, single strand-specific metallo-endoribonuclease involved in late-stage 70S ribosome quality control and in maturation of the 3' terminus of the 16S rRNA. In Picosynechococcus sp. (strain ATCC 27264 / PCC 7002 / PR-6) (Agmenellum quadruplicatum), this protein is Endoribonuclease YbeY.